We begin with the raw amino-acid sequence, 228 residues long: Chromatin remodeling protein SHL (228 aa).

The region spanning 21–137 is the BAH domain; it reads KSIQEGDAVL…STTGAFDPDR (117 aa). A PHD-type zinc finger spans residues 139–190; the sequence is TVFCKCEMPYNPDDLMVQCEECSEWFHPSCIGTTIEEAKKPDNFYCEECSPQ. Residues 191–203 are compositionally biased toward polar residues; the sequence is QQNLHNSNSTSNN. The interval 191–228 is disordered; that stretch reads QQNLHNSNSTSNNRDAKVNGKRSLEVTKSKNKHTKRPG. Basic and acidic residues predominate over residues 204 to 218; the sequence is RDAKVNGKRSLEVTK. The Nuclear localization signal signature appears at 210-217; the sequence is GKRSLEVT. Positions 219-228 are enriched in basic residues; it reads SKNKHTKRPG.

This sequence belongs to the SHL1/EBS protein family. Recognizes di- and trimethylated histone H3 at lysine 4. Interacts with HDA6. Interacts with DEK3. In terms of tissue distribution, expressed ubiquitously. Mostly expressed in roots, stems, leaves and flowers, and, to a lower extent, in siliques.

It localises to the nucleus. Functionally, chromatin remodeling factor that binds to methylated histone (e.g. H3K4me2/3) to prevent their acetylation (e.g. H3K9K14Ac), likely by recruiting histone deacetylase (HDAC) complexes, and thus regulate the transcription of target genes. Required during development and for fertility, probably by modulating developmental gene expression. Promotes development speed, but at fitness cost. Involved in the chromatin-mediated repression of floral initiation and controls genes regulating flowering. Negatively regulates the expression of the floral integrator SOC1, by preventing high levels of H3 acetylation, thus maintaining an inactive chromatin conformation. In Arabidopsis thaliana (Mouse-ear cress), this protein is Chromatin remodeling protein SHL.